We begin with the raw amino-acid sequence, 266 residues long: 3-methyl-2-oxobutanoate hydroxymethyltransferase (266 aa).

Positions 45 and 84 each coordinate Mg(2+). Residues D45 to S46, D84, and K112 contribute to the 3-methyl-2-oxobutanoate site. Position 114 (E114) interacts with Mg(2+). The Proton acceptor role is filled by E181.

This sequence belongs to the PanB family. In terms of assembly, homodecamer; pentamer of dimers. It depends on Mg(2+) as a cofactor.

It is found in the cytoplasm. The catalysed reaction is 3-methyl-2-oxobutanoate + (6R)-5,10-methylene-5,6,7,8-tetrahydrofolate + H2O = 2-dehydropantoate + (6S)-5,6,7,8-tetrahydrofolate. It functions in the pathway cofactor biosynthesis; (R)-pantothenate biosynthesis; (R)-pantoate from 3-methyl-2-oxobutanoate: step 1/2. Functionally, catalyzes the reversible reaction in which hydroxymethyl group from 5,10-methylenetetrahydrofolate is transferred onto alpha-ketoisovalerate to form ketopantoate. The protein is 3-methyl-2-oxobutanoate hydroxymethyltransferase of Pseudomonas syringae pv. syringae (strain B728a).